The sequence spans 307 residues: UDP-3-O-acyl-N-acetylglucosamine deacetylase (307 aa).

Zn(2+) contacts are provided by histidine 80, histidine 239, and aspartate 243. Histidine 266 functions as the Proton donor in the catalytic mechanism.

The protein belongs to the LpxC family. It depends on Zn(2+) as a cofactor.

It catalyses the reaction a UDP-3-O-[(3R)-3-hydroxyacyl]-N-acetyl-alpha-D-glucosamine + H2O = a UDP-3-O-[(3R)-3-hydroxyacyl]-alpha-D-glucosamine + acetate. It functions in the pathway glycolipid biosynthesis; lipid IV(A) biosynthesis; lipid IV(A) from (3R)-3-hydroxytetradecanoyl-[acyl-carrier-protein] and UDP-N-acetyl-alpha-D-glucosamine: step 2/6. Functionally, catalyzes the hydrolysis of UDP-3-O-myristoyl-N-acetylglucosamine to form UDP-3-O-myristoylglucosamine and acetate, the committed step in lipid A biosynthesis. The chain is UDP-3-O-acyl-N-acetylglucosamine deacetylase from Neisseria meningitidis serogroup A / serotype 4A (strain DSM 15465 / Z2491).